The following is a 60-amino-acid chain: Metallothionein (60 aa).

Residues 1-28 (MDPCECSKGGTCNCGGSCTCTNCSCTTC) form a beta region. The a divalent metal cation site is built by cysteine 4, cysteine 6, cysteine 12, cysteine 14, cysteine 18, cysteine 20, cysteine 23, cysteine 25, cysteine 28, cysteine 32, cysteine 33, cysteine 35, cysteine 36, cysteine 40, cysteine 43, cysteine 47, cysteine 49, cysteine 54, cysteine 58, and cysteine 59. Residues 29–60 (KKSCCPCCPSGCPKCASGCVCKGKTCDAACCQ) form an alpha region.

It belongs to the metallothionein superfamily. Type 1 family.

In terms of biological role, metallothioneins have a high content of cysteine residues that bind various heavy metals. The chain is Metallothionein (mt) from Perca fluviatilis (European perch).